Consider the following 361-residue polypeptide: Phospho-N-acetylmuramoyl-pentapeptide-transferase (361 aa).

The next 10 membrane-spanning stretches (helical) occupy residues 27-47 (GAMV…IDHL), 72-92 (TPTM…LLWA), 94-114 (LHNP…FVGF), 133-153 (LRLA…IWAG), 169-189 (FAIN…VGAG), 200-220 (GLAI…AYLV), 240-260 (LAVL…FNAP), 264-284 (IFMG…IAVA), 289-309 (IVLA…IVQV), and 338-358 (QIVI…LSTL).

It belongs to the glycosyltransferase 4 family. MraY subfamily. The cofactor is Mg(2+).

The protein resides in the cell inner membrane. It carries out the reaction UDP-N-acetyl-alpha-D-muramoyl-L-alanyl-gamma-D-glutamyl-meso-2,6-diaminopimeloyl-D-alanyl-D-alanine + di-trans,octa-cis-undecaprenyl phosphate = di-trans,octa-cis-undecaprenyl diphospho-N-acetyl-alpha-D-muramoyl-L-alanyl-D-glutamyl-meso-2,6-diaminopimeloyl-D-alanyl-D-alanine + UMP. It functions in the pathway cell wall biogenesis; peptidoglycan biosynthesis. In terms of biological role, catalyzes the initial step of the lipid cycle reactions in the biosynthesis of the cell wall peptidoglycan: transfers peptidoglycan precursor phospho-MurNAc-pentapeptide from UDP-MurNAc-pentapeptide onto the lipid carrier undecaprenyl phosphate, yielding undecaprenyl-pyrophosphoryl-MurNAc-pentapeptide, known as lipid I. The sequence is that of Phospho-N-acetylmuramoyl-pentapeptide-transferase from Afipia carboxidovorans (strain ATCC 49405 / DSM 1227 / KCTC 32145 / OM5) (Oligotropha carboxidovorans).